The primary structure comprises 371 residues: MSEAKNSNLAPFRLLVKLTNGVGDEFPLYYGNNLIVLGRTIETLEFGNDNFPENIIPVTDSKSDGIIYLTISKDNICQFSDEKGEQIDINSQFNSFEYDGISFHLKNMREDKSRGHILNGMYKNHSVFFFFAVIVVLIIIFSLSLKKDEVKEIAEIIDDKRYGIVNTGQCNYILAETQNDAVWASVALNKTGFTKCRYILVSNKEINRIQQYINQRFPFINLYVLNLVSDKAELLVFLSKERNSSKDTELDKLKNALIVEFPYIKNIKFNYLSDHNARGDAKGIFTKVNVQYKEICENNKVTYSVREELTDEKLELINRLISEHKNIYGDQYIEFSVLLIDDDFKGKSYLNSKDSYVMLNDKHWFFLDKNK.

A helical transmembrane segment spans residues 127-141 (VFFFFAVIVVLIIIF).

It localises to the cell inner membrane. Its subcellular location is the cell outer membrane. In terms of biological role, involved in the secretion of the Ipa antigens. Involved in the intracellular dissemination of Shigella. Part of the Mxi-Spa secretion apparatus. The chain is Protein MxiG (mxiG) from Shigella flexneri.